We begin with the raw amino-acid sequence, 198 residues long: Synaptobrevin homolog YKT6-A (198 aa).

In terms of domain architecture, Longin spans 8–127 (VLYKGENKVH…IQYNALDSYL (120 aa)). The region spanning 138–198 (PMSKVQAELD…RKQNSCCDIM (61 aa)) is the v-SNARE coiled-coil homology domain. C194 carries S-palmitoyl cysteine lipidation. Cysteine methyl ester is present on C195. C195 carries the S-farnesyl cysteine lipid modification. Residues 196–198 (DIM) constitute a propeptide, removed in mature form.

This sequence belongs to the synaptobrevin family. Post-translationally, palmitoylated; catalyzes its own palmitoylation. Palmitoylation is required for Golgi targeting. Farnesylation is required for Golgi targeting.

It localises to the cytoplasm. The protein localises to the cytosol. It is found in the cytoplasmic vesicle membrane. Its subcellular location is the golgi apparatus membrane. Its function is as follows. Vesicular soluble NSF attachment protein receptor (v-SNARE) mediating vesicle docking and fusion to a specific acceptor cellular compartment. Functions in endoplasmic reticulum to Golgi transport; as part of a SNARE complex composed of GOSR1, GOSR2 and STX5. Functions in early/recycling endosome to TGN transport; as part of a SNARE complex composed of BET1L, GOSR1 and STX5. Has a S-palmitoyl transferase activity. The sequence is that of Synaptobrevin homolog YKT6-A (ykt6-a) from Xenopus laevis (African clawed frog).